The following is a 264-amino-acid chain: Thymidylate synthase (264 aa).

Arginine 21 provides a ligand contact to dUMP. Histidine 51 is a (6R)-5,10-methylene-5,6,7,8-tetrahydrofolate binding site. 126-127 (RR) is a dUMP binding site. The active-site Nucleophile is the cysteine 146. DUMP-binding positions include 166–169 (RSAD), asparagine 177, and 207–209 (HIY). Aspartate 169 contributes to the (6R)-5,10-methylene-5,6,7,8-tetrahydrofolate binding site. Alanine 263 lines the (6R)-5,10-methylene-5,6,7,8-tetrahydrofolate pocket.

It belongs to the thymidylate synthase family. Bacterial-type ThyA subfamily. In terms of assembly, homodimer.

The protein localises to the cytoplasm. It carries out the reaction dUMP + (6R)-5,10-methylene-5,6,7,8-tetrahydrofolate = 7,8-dihydrofolate + dTMP. It functions in the pathway pyrimidine metabolism; dTTP biosynthesis. Functionally, catalyzes the reductive methylation of 2'-deoxyuridine-5'-monophosphate (dUMP) to 2'-deoxythymidine-5'-monophosphate (dTMP) while utilizing 5,10-methylenetetrahydrofolate (mTHF) as the methyl donor and reductant in the reaction, yielding dihydrofolate (DHF) as a by-product. This enzymatic reaction provides an intracellular de novo source of dTMP, an essential precursor for DNA biosynthesis. The sequence is that of Thymidylate synthase from Parabacteroides distasonis (strain ATCC 8503 / DSM 20701 / CIP 104284 / JCM 5825 / NCTC 11152).